Reading from the N-terminus, the 167-residue chain is UPF0102 protein RB9115 (167 aa).

The protein belongs to the UPF0102 family.

The sequence is that of UPF0102 protein RB9115 from Rhodopirellula baltica (strain DSM 10527 / NCIMB 13988 / SH1).